We begin with the raw amino-acid sequence, 184 residues long: MRSLSEIIAPSSYWTLAGTIGLNTNIFEINLINLILVLGILFYYGKGVLINLLENRERTILNTIQDAEERHKEATEKLQRARLRLQQAEMKADEIRIIGLTKMDRERRDLVDAADNDLRELEESKNYAIRFEKQRAIEQVRQQVSRLASERAFESLNGRLTNEFQLRMIDYHIGLLRAMANKST.

The chain crosses the membrane as a helical span at residues 29–49; sequence INLINLILVLGILFYYGKGVL.

The protein belongs to the ATPase B chain family. In terms of assembly, F-type ATPases have 2 components, F(1) - the catalytic core - and F(0) - the membrane proton channel. F(1) has five subunits: alpha(3), beta(3), gamma(1), delta(1), epsilon(1). F(0) has four main subunits: a(1), b(1), b'(1) and c(10-14). The alpha and beta chains form an alternating ring which encloses part of the gamma chain. F(1) is attached to F(0) by a central stalk formed by the gamma and epsilon chains, while a peripheral stalk is formed by the delta, b and b' chains.

The protein resides in the plastid. Its subcellular location is the chloroplast thylakoid membrane. In terms of biological role, f(1)F(0) ATP synthase produces ATP from ADP in the presence of a proton or sodium gradient. F-type ATPases consist of two structural domains, F(1) containing the extramembraneous catalytic core and F(0) containing the membrane proton channel, linked together by a central stalk and a peripheral stalk. During catalysis, ATP synthesis in the catalytic domain of F(1) is coupled via a rotary mechanism of the central stalk subunits to proton translocation. Functionally, component of the F(0) channel, it forms part of the peripheral stalk, linking F(1) to F(0). The chain is ATP synthase subunit b, chloroplastic from Adiantum capillus-veneris (Maidenhair fern).